A 480-amino-acid chain; its full sequence is UDP-N-acetylmuramoylalanine--D-glutamate ligase (480 aa).

120–126 (GTNGKTT) is an ATP binding site.

The protein belongs to the MurCDEF family.

The protein resides in the cytoplasm. It catalyses the reaction UDP-N-acetyl-alpha-D-muramoyl-L-alanine + D-glutamate + ATP = UDP-N-acetyl-alpha-D-muramoyl-L-alanyl-D-glutamate + ADP + phosphate + H(+). It participates in cell wall biogenesis; peptidoglycan biosynthesis. In terms of biological role, cell wall formation. Catalyzes the addition of glutamate to the nucleotide precursor UDP-N-acetylmuramoyl-L-alanine (UMA). The sequence is that of UDP-N-acetylmuramoylalanine--D-glutamate ligase from Nocardia farcinica (strain IFM 10152).